The sequence spans 227 residues: Cytochrome c oxidase subunit 2 (227 aa).

Over 1 to 14 (MAHPAQLGLQDATS) the chain is Mitochondrial intermembrane. Residues 15 to 45 (PVMEELITFHDHALMAMSLISLLVLYALFST) form a helical membrane-spanning segment. Residues 46–59 (LTTKMTNTNITDAQ) lie on the Mitochondrial matrix side of the membrane. Residues 60-87 (EMETIWTILPAIILVLIAFPSLRILYMT) form a helical membrane-spanning segment. The Mitochondrial intermembrane portion of the chain corresponds to 88–227 (DEVNNPSFTI…IFEMGPVFTL (140 aa)). Cu cation-binding residues include His-161, Cys-196, Glu-198, Cys-200, His-204, and Met-207. Glu-198 serves as a coordination point for Mg(2+).

It belongs to the cytochrome c oxidase subunit 2 family. In terms of assembly, component of the cytochrome c oxidase (complex IV, CIV), a multisubunit enzyme composed of 14 subunits. The complex is composed of a catalytic core of 3 subunits MT-CO1, MT-CO2 and MT-CO3, encoded in the mitochondrial DNA, and 11 supernumerary subunits COX4I, COX5A, COX5B, COX6A, COX6B, COX6C, COX7A, COX7B, COX7C, COX8 and NDUFA4, which are encoded in the nuclear genome. The complex exists as a monomer or a dimer and forms supercomplexes (SCs) in the inner mitochondrial membrane with NADH-ubiquinone oxidoreductase (complex I, CI) and ubiquinol-cytochrome c oxidoreductase (cytochrome b-c1 complex, complex III, CIII), resulting in different assemblies (supercomplex SCI(1)III(2)IV(1) and megacomplex MCI(2)III(2)IV(2)). Found in a complex with TMEM177, COA6, COX18, COX20, SCO1 and SCO2. Interacts with TMEM177 in a COX20-dependent manner. Interacts with COX20. Interacts with COX16. Cu cation is required as a cofactor.

The protein resides in the mitochondrion inner membrane. It carries out the reaction 4 Fe(II)-[cytochrome c] + O2 + 8 H(+)(in) = 4 Fe(III)-[cytochrome c] + 2 H2O + 4 H(+)(out). Its function is as follows. Component of the cytochrome c oxidase, the last enzyme in the mitochondrial electron transport chain which drives oxidative phosphorylation. The respiratory chain contains 3 multisubunit complexes succinate dehydrogenase (complex II, CII), ubiquinol-cytochrome c oxidoreductase (cytochrome b-c1 complex, complex III, CIII) and cytochrome c oxidase (complex IV, CIV), that cooperate to transfer electrons derived from NADH and succinate to molecular oxygen, creating an electrochemical gradient over the inner membrane that drives transmembrane transport and the ATP synthase. Cytochrome c oxidase is the component of the respiratory chain that catalyzes the reduction of oxygen to water. Electrons originating from reduced cytochrome c in the intermembrane space (IMS) are transferred via the dinuclear copper A center (CU(A)) of subunit 2 and heme A of subunit 1 to the active site in subunit 1, a binuclear center (BNC) formed by heme A3 and copper B (CU(B)). The BNC reduces molecular oxygen to 2 water molecules using 4 electrons from cytochrome c in the IMS and 4 protons from the mitochondrial matrix. The sequence is that of Cytochrome c oxidase subunit 2 (MT-CO2) from Mandrillus leucophaeus (Drill).